Reading from the N-terminus, the 247-residue chain is ATP synthase subunit a, chloroplastic (247 aa).

5 helical membrane-spanning segments follow: residues 38–58 (QVLI…TIAV), 95–115 (VPFI…GALL), 134–154 (INTT…AGLT), 199–219 (LVVV…VMLL), and 220–240 (GLFT…AYIG).

It belongs to the ATPase A chain family. In terms of assembly, F-type ATPases have 2 components, CF(1) - the catalytic core - and CF(0) - the membrane proton channel. CF(1) has five subunits: alpha(3), beta(3), gamma(1), delta(1), epsilon(1). CF(0) has four main subunits: a, b, b' and c.

It localises to the plastid. It is found in the chloroplast thylakoid membrane. Functionally, key component of the proton channel; it plays a direct role in the translocation of protons across the membrane. This Solanum lycopersicum (Tomato) protein is ATP synthase subunit a, chloroplastic.